Reading from the N-terminus, the 300-residue chain is Serine/arginine-rich splicing factor SR34A (300 aa).

The region spanning 7-82 (RSIYVGNLPG…CRLRVELAHG (76 aa)) is the RRM 1 domain. Disordered stretches follow at residues 81–110 (HGGR…GGGG) and 198–300 (YESS…EGSV). Residues 94–110 (GYGGGGSGYGGGGGGGG) are compositionally biased toward gly residues. An RRM 2 domain is found at 122–200 (FRVIVRGLPS…GFIRVKKYES (79 aa)). Residues 203–239 (SRSRSPSRSRSRSRSRSRSRGRGRSHSRSRSLSRSKS) show a composition bias toward basic residues. A phosphoserine mark is found at serine 207, serine 209, serine 231, serine 233, serine 239, serine 259, serine 275, and serine 285. The span at 253–262 (SRSISKSRSP) shows a compositional bias: low complexity. The segment covering 275–287 (SRSKSRSRSRSRS) has biased composition (basic residues).

The protein belongs to the splicing factor SR family. SR subfamily. In terms of assembly, component of the spliceosome.

The protein localises to the nucleus speckle. It localises to the nucleus. The protein resides in the nucleoplasm. Probably involved in intron recognition and spliceosome assembly. The sequence is that of Serine/arginine-rich splicing factor SR34A (SR34A) from Arabidopsis thaliana (Mouse-ear cress).